Consider the following 351-residue polypeptide: UDP-N-acetylenolpyruvoylglucosamine reductase (351 aa).

Positions His25–Leu196 constitute an FAD-binding PCMH-type domain. Residue Arg173 is part of the active site. Catalysis depends on Ser246, which acts as the Proton donor. Residue Glu343 is part of the active site.

Belongs to the MurB family. FAD is required as a cofactor.

The protein resides in the cytoplasm. It carries out the reaction UDP-N-acetyl-alpha-D-muramate + NADP(+) = UDP-N-acetyl-3-O-(1-carboxyvinyl)-alpha-D-glucosamine + NADPH + H(+). The protein operates within cell wall biogenesis; peptidoglycan biosynthesis. Cell wall formation. The chain is UDP-N-acetylenolpyruvoylglucosamine reductase from Xylella fastidiosa (strain M23).